Reading from the N-terminus, the 160-residue chain is S-ribosylhomocysteine lyase (160 aa).

Residues His-57, His-61, and Cys-127 each coordinate Fe cation.

It belongs to the LuxS family. Homodimer. The cofactor is Fe cation.

It carries out the reaction S-(5-deoxy-D-ribos-5-yl)-L-homocysteine = (S)-4,5-dihydroxypentane-2,3-dione + L-homocysteine. Involved in the synthesis of autoinducer 2 (AI-2) which is secreted by bacteria and is used to communicate both the cell density and the metabolic potential of the environment. The regulation of gene expression in response to changes in cell density is called quorum sensing. Catalyzes the transformation of S-ribosylhomocysteine (RHC) to homocysteine (HC) and 4,5-dihydroxy-2,3-pentadione (DPD). The sequence is that of S-ribosylhomocysteine lyase from Streptococcus thermophilus (strain CNRZ 1066).